Here is a 157-residue protein sequence, read N- to C-terminus: uncharacterized protein (157 aa).

Residues 1–17 form the signal peptide; sequence MSMKTKAAFHLVLFGLA. The N-palmitoyl cysteine moiety is linked to residue C18. A lipid anchor (S-diacylglycerol cysteine) is attached at C18. Transmembrane regions (helical) follow at residues 42–64, 98–120, and 124–146; these read MVFDLNLTPFILFVAASAVYLYL, ASYIAVYFSLPAAAVLLIFYPLF, and IPFFPIIIVFIIMIIQHLSYVIS.

It localises to the cell membrane. This is an uncharacterized protein from Bacillus subtilis (strain 168).